The sequence spans 624 residues: UvrABC system protein C (624 aa).

Residues 27-105 (LSPGVYRMLS…IKSLGPRYNI (79 aa)) form the GIY-YIG domain. The UVR domain occupies 215-250 (RRVQHDLTARMESAAEAMEYEAAAVFRDRIRALTRI).

It belongs to the UvrC family. In terms of assembly, interacts with UvrB in an incision complex.

It localises to the cytoplasm. In terms of biological role, the UvrABC repair system catalyzes the recognition and processing of DNA lesions. UvrC both incises the 5' and 3' sides of the lesion. The N-terminal half is responsible for the 3' incision and the C-terminal half is responsible for the 5' incision. This is UvrABC system protein C from Paramagnetospirillum magneticum (strain ATCC 700264 / AMB-1) (Magnetospirillum magneticum).